Here is an 802-residue protein sequence, read N- to C-terminus: Osmosensitive cation channel TMEM63C (802 aa).

Residues 1-35 (MTASPESMGQKFRNMTANECFQSRSTVLQGQPFGG) lie on the Extracellular side of the membrane. A helical membrane pass occupies residues 36 to 60 (IPTVLLLNIILWVCVVLVYSFLRKA). Over 61 to 124 (AWDYGRLALL…RDRDLINKCG (64 aa)) the chain is Cytoplasmic. Phosphoserine occurs at positions 75 and 78. Residues 125–157 (EDARIYIMFQYHLIIFVLILCIPSLGIILPVNY) traverse the membrane as a helical segment. Residues 158-180 (IGSALDWSSHFGRTTIVNVSTES) lie on the Extracellular side of the membrane. The helical transmembrane segment at 181–205 (QFLWLHSIFAFMYFLTNFAFMGHHC) threads the bilayer. At 206–401 (LGFVPKKNLH…IIWKHLSIRR (196 aa)) the chain is on the cytoplasmic side. Residues 402–431 (FSWWARFIAINTSLFFLFFFLTTPAIIINT) form a helical membrane-spanning segment. Residues 432–446 (IDMYNVTRPIEKLQS) are Extracellular-facing. Residues 447-476 (PVVTQFFPSVLLWAFTVIMPLLVYFSAFLE) traverse the membrane as a helical segment. Residues 477 to 480 (AHWT) lie on the Cytoplasmic side of the membrane. The helical transmembrane segment at 481–517 (RSNQNLIIMYKCYIFLVFMVVILPSMGLTSLDVFLRW) threads the bilayer. Over 518–540 (LFDIYYLEHATIRFQCVFLPDNG) the chain is Extracellular. The chain crosses the membrane as a helical span at residues 541-573 (AFFINYVITSALFGTGMELMRLGSLCTYCTRLF). Residues 574 to 593 (LSRSEPERVHIRKNLAMDFQ) are Cytoplasmic-facing. The chain crosses the membrane as a helical span at residues 594–612 (FGREYAWMLNVFSVVMAYS). Residues 613–615 (ITC) lie on the Extracellular side of the membrane. A helical membrane pass occupies residues 616–640 (PIIVPFGLLYLCMKHITDRYNMYYS). The Cytoplasmic portion of the chain corresponds to 641-647 (YAPTKLN). The helical transmembrane segment at 648–676 (AQIHMAAVYQAIFAPLLGLFWMLFFSILR) threads the bilayer. The Extracellular segment spans residues 677–681 (VGSLH). Residues 682 to 702 (SITLFSLSSIIISVIIAFSGV) form a helical membrane-spanning segment. Residues 703–802 (FLGKFRIAQQ…EGLELEGQSH (100 aa)) lie on the Cytoplasmic side of the membrane. Positions 753–785 (TPASSPARHTYGTMNSQPEEGEEESGLRGFARE) are disordered.

This sequence belongs to the CSC1 (TC 1.A.17) family. As to quaternary structure, monomer. Expressed in podocytes of kidney glomeruli.

The protein localises to the endoplasmic reticulum membrane. Its subcellular location is the cell membrane. The catalysed reaction is Ca(2+)(in) = Ca(2+)(out). Functionally, acts as an osmosensitive cation channel preferentially activated upon hypotonic stress. In contrast to TMEM63B, does not show phospholipid scramblase activity. Enriched in mitochondria-ER contact sites where it may regulate the metabolite flux and organelles' morphologies in response to osmotic changes. In particular may regulate mitochondrial motility and function in motor neuron axons. Required for the functional integrity of the kidney glomerular filtration barrier. The chain is Osmosensitive cation channel TMEM63C (Tmem63c) from Rattus norvegicus (Rat).